The sequence spans 572 residues: Proline--tRNA ligase (572 aa).

It belongs to the class-II aminoacyl-tRNA synthetase family. ProS type 1 subfamily. Homodimer.

Its subcellular location is the cytoplasm. It catalyses the reaction tRNA(Pro) + L-proline + ATP = L-prolyl-tRNA(Pro) + AMP + diphosphate. Catalyzes the attachment of proline to tRNA(Pro) in a two-step reaction: proline is first activated by ATP to form Pro-AMP and then transferred to the acceptor end of tRNA(Pro). As ProRS can inadvertently accommodate and process non-cognate amino acids such as alanine and cysteine, to avoid such errors it has two additional distinct editing activities against alanine. One activity is designated as 'pretransfer' editing and involves the tRNA(Pro)-independent hydrolysis of activated Ala-AMP. The other activity is designated 'posttransfer' editing and involves deacylation of mischarged Ala-tRNA(Pro). The misacylated Cys-tRNA(Pro) is not edited by ProRS. This is Proline--tRNA ligase from Shewanella amazonensis (strain ATCC BAA-1098 / SB2B).